A 183-amino-acid chain; its full sequence is Ribosome maturation factor RimM (183 aa).

Residues 104 to 183 enclose the PRC barrel domain; sequence EGDYYWKDLM…TIEVDWDPGF (80 aa).

Belongs to the RimM family. As to quaternary structure, binds ribosomal protein uS19.

Its subcellular location is the cytoplasm. Its function is as follows. An accessory protein needed during the final step in the assembly of 30S ribosomal subunit, possibly for assembly of the head region. Essential for efficient processing of 16S rRNA. May be needed both before and after RbfA during the maturation of 16S rRNA. It has affinity for free ribosomal 30S subunits but not for 70S ribosomes. The protein is Ribosome maturation factor RimM of Salmonella arizonae (strain ATCC BAA-731 / CDC346-86 / RSK2980).